The chain runs to 274 residues: MPSASSPRARLAALAVAALAAAPLAASAQPKAARGKTEVTWYGHAAFLVTTPGGTVLAIDPWLSNPKAPEPGLAEKLPKVDYILVSHGHFDHVGDAVALAKRTGAKLITNFDLGSSLVAAGYPKDQAGMDTLGNMGGTIQAGDAAVTMVAAVHSSGFADDKGAAHPGGNPMGFVIQVKGGPTLYHTGDTDLTQDMKQLPERFGRVDVMLTCIGGHFTMDPKAAAIAVGYVRPRTVVPMHFGTFPAIAGTPEELRAALKGKAEVRVLEPGKPVAF.

The protein belongs to the UPF0173 family.

The sequence is that of UPF0173 metal-dependent hydrolase AnaeK_1127 from Anaeromyxobacter sp. (strain K).